The following is a 477-amino-acid chain: Cobyric acid synthase (477 aa).

One can recognise a GATase cobBQ-type domain in the interval glycine 248–phenylalanine 432. Cysteine 330 (nucleophile) is an active-site residue. Residue histidine 424 is part of the active site.

The protein belongs to the CobB/CobQ family. CobQ subfamily.

It functions in the pathway cofactor biosynthesis; adenosylcobalamin biosynthesis. Functionally, catalyzes amidations at positions B, D, E, and G on adenosylcobyrinic A,C-diamide. NH(2) groups are provided by glutamine, and one molecule of ATP is hydrogenolyzed for each amidation. The chain is Cobyric acid synthase from Paracoccus denitrificans (strain Pd 1222).